A 277-amino-acid chain; its full sequence is Undecaprenyl-diphosphatase (277 aa).

The next 7 helical transmembrane spans lie at Y3–F23, L48–F68, I97–I117, L125–L145, S198–I218, I227–I247, and L257–I277.

It belongs to the UppP family.

The protein localises to the cell membrane. The catalysed reaction is di-trans,octa-cis-undecaprenyl diphosphate + H2O = di-trans,octa-cis-undecaprenyl phosphate + phosphate + H(+). In terms of biological role, catalyzes the dephosphorylation of undecaprenyl diphosphate (UPP). Confers resistance to bacitracin. The polypeptide is Undecaprenyl-diphosphatase (Acholeplasma laidlawii (strain PG-8A)).